A 344-amino-acid chain; its full sequence is Holliday junction branch migration complex subunit RuvB (344 aa).

The interval 1 to 182 is large ATPase domain (RuvB-L); the sequence is MRIELLNTPP…FGINSRFDYY (182 aa). Residues isoleucine 21, arginine 22, glycine 63, lysine 66, threonine 67, threonine 68, 129 to 131, arginine 172, tyrosine 182, and arginine 219 contribute to the ATP site; that span reads EDF. Threonine 67 contacts Mg(2+). Residues 183–253 form a small ATPAse domain (RuvB-S) region; sequence APELLEGIIR…IAMKTLDCLE (71 aa). A head domain (RuvB-H) region spans residues 256–344; the sequence is EEGLDDMDKK…ISLFDAQPTS (89 aa). The DNA site is built by arginine 311 and arginine 316.

It belongs to the RuvB family. Homohexamer. Forms an RuvA(8)-RuvB(12)-Holliday junction (HJ) complex. HJ DNA is sandwiched between 2 RuvA tetramers; dsDNA enters through RuvA and exits via RuvB. An RuvB hexamer assembles on each DNA strand where it exits the tetramer. Each RuvB hexamer is contacted by two RuvA subunits (via domain III) on 2 adjacent RuvB subunits; this complex drives branch migration. In the full resolvosome a probable DNA-RuvA(4)-RuvB(12)-RuvC(2) complex forms which resolves the HJ.

It localises to the cytoplasm. It catalyses the reaction ATP + H2O = ADP + phosphate + H(+). Its function is as follows. The RuvA-RuvB-RuvC complex processes Holliday junction (HJ) DNA during genetic recombination and DNA repair, while the RuvA-RuvB complex plays an important role in the rescue of blocked DNA replication forks via replication fork reversal (RFR). RuvA specifically binds to HJ cruciform DNA, conferring on it an open structure. The RuvB hexamer acts as an ATP-dependent pump, pulling dsDNA into and through the RuvAB complex. RuvB forms 2 homohexamers on either side of HJ DNA bound by 1 or 2 RuvA tetramers; 4 subunits per hexamer contact DNA at a time. Coordinated motions by a converter formed by DNA-disengaged RuvB subunits stimulates ATP hydrolysis and nucleotide exchange. Immobilization of the converter enables RuvB to convert the ATP-contained energy into a lever motion, pulling 2 nucleotides of DNA out of the RuvA tetramer per ATP hydrolyzed, thus driving DNA branch migration. The RuvB motors rotate together with the DNA substrate, which together with the progressing nucleotide cycle form the mechanistic basis for DNA recombination by continuous HJ branch migration. Branch migration allows RuvC to scan DNA until it finds its consensus sequence, where it cleaves and resolves cruciform DNA. This Pelodictyon phaeoclathratiforme (strain DSM 5477 / BU-1) protein is Holliday junction branch migration complex subunit RuvB.